The primary structure comprises 704 residues: Elongation factor G (704 aa).

One can recognise a tr-type G domain in the interval 10-290 (TKVRNIGIMA…AVVDYLPSPL (281 aa)). Residues 19–26 (AHIDAGKT), 83–87 (DTPGH), and 137–140 (NKMD) contribute to the GTP site.

This sequence belongs to the TRAFAC class translation factor GTPase superfamily. Classic translation factor GTPase family. EF-G/EF-2 subfamily.

Its subcellular location is the cytoplasm. Its function is as follows. Catalyzes the GTP-dependent ribosomal translocation step during translation elongation. During this step, the ribosome changes from the pre-translocational (PRE) to the post-translocational (POST) state as the newly formed A-site-bound peptidyl-tRNA and P-site-bound deacylated tRNA move to the P and E sites, respectively. Catalyzes the coordinated movement of the two tRNA molecules, the mRNA and conformational changes in the ribosome. The protein is Elongation factor G of Beutenbergia cavernae (strain ATCC BAA-8 / DSM 12333 / CCUG 43141 / JCM 11478 / NBRC 16432 / NCIMB 13614 / HKI 0122).